The sequence spans 334 residues: Glyceraldehyde-3-phosphate dehydrogenase B (334 aa).

NAD(+) is bound by residues 12–13, Asp-34, and Ser-121; that span reads RI. Residues 149–151, Thr-180, 209–210, and Arg-232 contribute to the D-glyceraldehyde 3-phosphate site; these read SCT and TG. Cys-150 acts as the Nucleophile in catalysis. NAD(+) is bound at residue Asn-314.

Belongs to the glyceraldehyde-3-phosphate dehydrogenase family. Homotetramer.

It carries out the reaction D-glyceraldehyde 3-phosphate + phosphate + NAD(+) = (2R)-3-phospho-glyceroyl phosphate + NADH + H(+). It functions in the pathway carbohydrate degradation; glycolysis; pyruvate from D-glyceraldehyde 3-phosphate: step 1/5. Functionally, glyceraldehyde-3-phosphate dehydrogenase; part of the gene cluster that mediates the biosynthesis of heptelidic acid (HA), a sesquiterpene lactone that acts as an inhibitor of glyceraldehyde-3-phosphatedehydrogenase (GAPDH) and a growth inhibitor of the salt-tolerant lactic acid bacteria in soy sauce brewing. The GAPDPH hepG/gdpB shows much higher resistance to HA than the GAPDH gpdA located outside of the cluster, but it does not seem to act in self-resistance. This chain is Glyceraldehyde-3-phosphate dehydrogenase B, found in Aspergillus oryzae (strain ATCC 42149 / RIB 40) (Yellow koji mold).